The following is a 337-amino-acid chain: MSGMGDGYVGTAQDAVRIRRLQKQREAERKKIQELKSKSASGNDQSGLLQFGTSSCEILDTAFKKETVGLVTREEYVEKRVNIRNKFEEEEKEKLQKLQQEEEELQLEKRNKKRKIKGSSRLSFAEDFENGSDEDDGENKSSGTGNLRCGKLGKDPSVETNFLPDSEREAEEQAERERLKKQWLREQEQIKNEPLEITYSYWDGTGHRRVIQVRKGDPIGNFLRAVQQQLAPDFREIRTASVENLLYVKEDLIIPHQHSFYELIINKARGKSGPLFHFDVHEDVRTIADATIEKDESHAGKVVERHWYEKNKHIFPASRWEIYDPTKKWERYTVHGD.

Serine 2 carries the post-translational modification N-acetylserine. Coiled coils occupy residues 13–41 (QDAV…KSAS) and 72–121 (TREE…GSSR). Basic and acidic residues predominate over residues 23–37 (KQREAERKKIQELKS). Positions 23-47 (KQREAERKKIQELKSKSASGNDQSG) are disordered. Residues 38 to 47 (KSASGNDQSG) are compositionally biased toward polar residues. The tract at residues 125 to 174 (AEDFENGSDEDDGENKSSGTGNLRCGKLGKDPSVETNFLPDSEREAEEQA) is disordered. Over residues 126–137 (EDFENGSDEDDG) the composition is skewed to acidic residues. Phosphoserine is present on serine 132. A compositionally biased stretch (basic and acidic residues) spans 165–174 (DSEREAEEQA).

It belongs to the FAM50 family. As to expression, expressed in leaves stems, flowers, roots, trichomes and hypocotyls.

The protein localises to the nucleus. Its function is as follows. Involved in light regulation of the circadian clock and photomorphogenesis. May play a global role in coordinating growth in response to the light environment. Acts as a light quality sensor directing both negative and positive transcriptional regulation. Inhibits growth in red light but promote growth in blue light. Inhibits clock gene expression in diurnal cycles. Plays no role in the control of flowering time. The protein is Protein XAP5 CIRCADIAN TIMEKEEPER (XCT) of Arabidopsis thaliana (Mouse-ear cress).